The following is a 420-amino-acid chain: Pyrin and HIN domain-containing protein 1 (420 aa).

The 87-residue stretch at 1–87 (MVNEYKRIVL…ANKLKNEKAK (87 aa)) folds into the Pyrin domain. Disordered stretches follow at residues 82–201 (KNEK…SSSA) and 216–236 (RLKN…GSKK). The span at 87–102 (KAKRTRTGKRKTAAKR) shows a compositional bias: basic residues. Composition is skewed to polar residues over residues 108–118 (PSTSQPMSTTN) and 126–151 (GRST…AIQI). Residues 152–169 (SPTIASSSGQTSSRSSET) are compositionally biased toward low complexity. Polar residues predominate over residues 170 to 201 (LQSIIQSPKTPKRPSSSILDPPVSSGTASSSA). Positions 219-416 (NVPKEPSEEN…STTHSNMQVI (198 aa)) constitute an HIN-200 domain. Over residues 220-229 (VPKEPSEENG) the composition is skewed to basic and acidic residues.

The protein belongs to the HIN-200 family.

It localises to the nucleus. This is Pyrin and HIN domain-containing protein 1 from Mus musculus (Mouse).